Here is a 215-residue protein sequence, read N- to C-terminus: Cytochrome b6 (215 aa).

The helical transmembrane segment at I32 to F52 threads the bilayer. C35 is a heme c binding site. H86 and H100 together coordinate heme b. 3 consecutive transmembrane segments (helical) span residues A90–F110, L116–Y136, and L186–I206. Heme b is bound by residues H187 and H202.

The protein belongs to the cytochrome b family. PetB subfamily. As to quaternary structure, the 4 large subunits of the cytochrome b6-f complex are cytochrome b6, subunit IV (17 kDa polypeptide, PetD), cytochrome f and the Rieske protein, while the 4 small subunits are PetG, PetL, PetM and PetN. The complex functions as a dimer. The cofactor is heme b. Requires heme c as cofactor.

Its subcellular location is the plastid. It is found in the chloroplast thylakoid membrane. Functionally, component of the cytochrome b6-f complex, which mediates electron transfer between photosystem II (PSII) and photosystem I (PSI), cyclic electron flow around PSI, and state transitions. The protein is Cytochrome b6 of Spirogyra maxima (Green alga).